Reading from the N-terminus, the 412-residue chain is CinA-like protein (412 aa).

It belongs to the CinA family.

The polypeptide is CinA-like protein (Salinibacter ruber (strain DSM 13855 / M31)).